The chain runs to 1050 residues: Transcription intermediary factor 1-alpha (1050 aa).

A Glycyl lysine isopeptide (Lys-Gly) (interchain with G-Cter in SUMO2) cross-link involves residue Lys-7. The segment covering 15 to 30 (ASAAASGGPSAAPSGE) has biased composition (low complexity). Residues 15–44 (ASAAASGGPSAAPSGENEAESRQGPDSERG) are disordered. Over residues 33–44 (AESRQGPDSERG) the composition is skewed to basic and acidic residues. Residues 56–82 (CAVCHQNIQSRAPKLLPCLHSFCQRCL) form an RING-type zinc finger. Thr-101 carries the phosphothreonine modification. The residue at position 110 (Ser-110) is a Phosphoserine. B box-type zinc fingers lie at residues 158-211 (KSNQ…VSPE) and 218-259 (QRPV…YQFI). Cys-163, Cys-166, Cys-187, and His-200 together coordinate Zn(2+). Residue Lys-205 forms a Glycyl lysine isopeptide (Lys-Gly) (interchain with G-Cter in SUMO2) linkage. Residues Cys-223, His-226, Cys-246, and His-251 each coordinate Zn(2+). Lys-276 participates in a covalent cross-link: Glycyl lysine isopeptide (Lys-Gly) (interchain with G-Cter in SUMO2). The stretch at 289-359 (NQIQNRIIEV…AGLSKQLEHV (71 aa)) forms a coiled coil. A disordered region spans residues 429 to 456 (ESQPQMPKQNPVVEQNSQPPSGLSSNQL). A compositionally biased stretch (polar residues) spans 431–456 (QPQMPKQNPVVEQNSQPPSGLSSNQL). Glycyl lysine isopeptide (Lys-Gly) (interchain with G-Cter in SUMO2) cross-links involve residues Lys-436 and Lys-458. Arg-469 is subject to Omega-N-methylarginine. Composition is skewed to low complexity over residues 476-490 (QVMA…RPAP) and 499-510 (QGPIQQPSISHQ). Residues 476–550 (QVMAQRQQVQ…PPNQNIPRQA (75 aa)) are disordered. Pro residues predominate over residues 526–535 (PNGPVLPPHP). Lys-552 is covalently cross-linked (Glycyl lysine isopeptide (Lys-Gly) (interchain with G-Cter in SUMO2)). The segment at 571–594 (ISSGQGTPSTTNSTSSTPSSPTIT) is disordered. Residues 577-594 (TPSTTNSTSSTPSSPTIT) show a composition bias toward low complexity. Lys-641 participates in a covalent cross-link: Glycyl lysine isopeptide (Lys-Gly) (interchain with G-Cter in SUMO2). The disordered stretch occupies residues 643–712 (TNIDHGQPRP…PAGADSTHKV (70 aa)). 3 positions are modified to phosphoserine: Ser-654, Ser-660, and Ser-667. Residues 654–666 (SNRTVQSPNSSVP) are compositionally biased toward polar residues. Residues 685–707 (SPSASSVGSRGSSGSSSKPAGAD) are compositionally biased toward low complexity. Residues Lys-702 and Lys-711 each participate in a glycyl lysine isopeptide (Lys-Gly) (interchain with G-Cter in SUMO2) cross-link. Lys-723 is covalently cross-linked (Glycyl lysine isopeptide (Lys-Gly) (interchain with G-Cter in SUMO1); alternate). A Glycyl lysine isopeptide (Lys-Gly) (interchain with G-Cter in SUMO2); alternate cross-link involves residue Lys-723. Lys-741 is covalently cross-linked (Glycyl lysine isopeptide (Lys-Gly) (interchain with G-Cter in SUMO2)). The residue at position 744 (Ser-744) is a Phosphoserine. The segment at 754–779 (NYPRSILTSLLLNSSQSSTSEETVLR) is nuclear receptor binding site (NRBS). The interval 766-824 (NSSQSSTSEETVLRSDAPDSTGDQPGLHQDNSSNGKSEWLDPSQKSPLHVGETRKEDDP) is disordered. Ser-768 is subject to Phosphoserine; by ATM. Residue Lys-801 forms a Glycyl lysine isopeptide (Lys-Gly) (interchain with G-Cter in SUMO2) linkage. A Phosphoserine modification is found at Ser-808. A Glycyl lysine isopeptide (Lys-Gly) (interchain with G-Cter in SUMO2) cross-link involves residue Lys-810. Ser-811 is modified (phosphoserine). At Thr-818 the chain carries Phosphothreonine. A PHD-type zinc finger spans residues 826–873 (EDWCAVCQNGGELLCCEKCPKVFHLSCHVPTLTNFPSGEWICTFCRDL). The segment at 834–840 (NGGELLC) is interaction with histone H3 that is not methylated at 'Lys-4' (H3K4me0). Lys-875 is covalently cross-linked (Glycyl lysine isopeptide (Lys-Gly) (interchain with G-Cter in SUMO2)). Residues 891 to 907 (KKKTEGLVKLTPIDKRK) carry the Nuclear localization signal motif. The region spanning 899 to 1004 (KLTPIDKRKC…NYFEELLKNL (106 aa)) is the Bromo domain. Lys-949 is covalently cross-linked (Glycyl lysine isopeptide (Lys-Gly) (interchain with G-Cter in SUMO2)). The interval 979 to 980 (FN) is interaction with histone H3 that is acetylated at 'Lys-23' (H3K23ac). Lys-992 is covalently cross-linked (Glycyl lysine isopeptide (Lys-Gly) (interchain with G-Cter in SUMO2)). Basic and acidic residues predominate over residues 1011–1026 (PKPEFRNESEDNKFSD). The tract at residues 1011–1036 (PKPEFRNESEDNKFSDDSDDDFVQPR) is disordered. Phosphoserine is present on residues Ser-1019, Ser-1025, and Ser-1028. Lys-1041 is covalently cross-linked (Glycyl lysine isopeptide (Lys-Gly) (interchain with G-Cter in SUMO2)). Ser-1042 bears the Phosphoserine mark.

Interacts with CARM1, NCOA2/GRIP1, PML, KAT5/TIP60, BRD7, CBX1, CBX3 and CBX5. Part of a coactivator complex containing TRIM24, NCOA2 and CARM1. Interacts with NR3C2/MCR. Interacts with the ligand-binding domain of estrogen receptors (in vitro). Interaction with DNA-bound estrogen receptors requires the presence of estradiol. Interacts with AR and p53/TP53. Interacts (via bromo domain) with histone H3 (via N-terminus), provided that it is not methylated at 'Lys-4' (H3K4me0). Does not interact with histone H3 that is methylated at 'Lys-4' (H3K4me1, H3K4me2 or H3K4me3). Interacts (via bromo domain) with histone H3 (via N-terminus) that is acetylated at 'Lys-23' (H3K23ac). Has the highest affinity for histone H3 that is both unmodified at 'Lys-4' (H3K4me0) and acetylated at 'Lys-23' (H3K23ac). Has very low affinity for histone H3 that is methylated at 'Lys-9' (H3K9me), or acetylated at both 'Lys-9' (H3K9ac) and 'Lys-14' (H3K14ac), or acetylated at 'Lys-27' (H3K27ac) (in vitro). Interacts with TRIM16. Post-translationally, phosphorylated at Ser-768 by ATM kinase induces ubiquitination and degradation during DNA damage. In terms of processing, sumoylated. Undergoes ubiquitination-mediated degradation in response to DNA damage.

The protein localises to the nucleus. It is found in the cytoplasm. The protein resides in the mitochondrion. The catalysed reaction is S-ubiquitinyl-[E2 ubiquitin-conjugating enzyme]-L-cysteine + [acceptor protein]-L-lysine = [E2 ubiquitin-conjugating enzyme]-L-cysteine + N(6)-ubiquitinyl-[acceptor protein]-L-lysine.. It participates in protein modification; protein ubiquitination. Its function is as follows. Transcriptional coactivator that interacts with numerous nuclear receptors and coactivators and modulates the transcription of target genes. Interacts with chromatin depending on histone H3 modifications, having the highest affinity for histone H3 that is both unmodified at 'Lys-4' (H3K4me0) and acetylated at 'Lys-23' (H3K23ac). Has E3 protein-ubiquitin ligase activity. During the DNA damage response, participates in an autoregulatory feedback loop with TP53. Early in response to DNA damage, ATM kinase phosphorylates TRIM24 leading to its ubiquitination and degradation. After sufficient DNA repair has occurred, TP53 activates TRIM24 transcription, ultimately leading to TRIM24-mediated TP53 ubiquitination and degradation. Plays a role in the regulation of cell proliferation and apoptosis, at least in part via its effects on p53/TP53 levels. Up-regulates ligand-dependent transcription activation by AR, GCR/NR3C1, thyroid hormone receptor (TR) and ESR1. Modulates transcription activation by retinoic acid (RA) receptors, including RARA. Plays a role in regulating retinoic acid-dependent proliferation of hepatocytes. Also participates in innate immunity by mediating the specific 'Lys-63'-linked ubiquitination of TRAF3 leading to activation of downstream signal transduction of the type I IFN pathway. Additionally, negatively regulates NLRP3/CASP1/IL-1beta-mediated pyroptosis and cell migration probably by ubiquitinating NLRP3. The sequence is that of Transcription intermediary factor 1-alpha (TRIM24) from Homo sapiens (Human).